Consider the following 132-residue polypeptide: DNA-directed RNA polymerase subunit omega (132 aa).

Belongs to the RNA polymerase subunit omega family. In terms of assembly, the RNAP catalytic core consists of 2 alpha, 1 beta, 1 beta' and 1 omega subunit. When a sigma factor is associated with the core the holoenzyme is formed, which can initiate transcription.

The enzyme catalyses RNA(n) + a ribonucleoside 5'-triphosphate = RNA(n+1) + diphosphate. Functionally, promotes RNA polymerase assembly. Latches the N- and C-terminal regions of the beta' subunit thereby facilitating its interaction with the beta and alpha subunits. The sequence is that of DNA-directed RNA polymerase subunit omega from Ehrlichia ruminantium (strain Welgevonden).